A 119-amino-acid chain; its full sequence is UPF0102 protein GFO_3098 (119 aa).

It belongs to the UPF0102 family.

This is UPF0102 protein GFO_3098 from Christiangramia forsetii (strain DSM 17595 / CGMCC 1.15422 / KT0803) (Gramella forsetii).